Reading from the N-terminus, the 396-residue chain is Septu protein PtuA (396 aa).

Its function is as follows. Component of antiviral defense system Septu type I, composed of PtuA and PtuB. Expression of Septu type I in B.subtilis (strain BEST7003) confers resistance to phages SBSphiC and SBSphiJ. May be an ATPase. The protein is Septu protein PtuA of Bacillus thuringiensis.